Here is a 160-residue protein sequence, read N- to C-terminus: uncharacterized protein (160 aa).

A coiled-coil region spans residues 69–145 (NQLLNMMAQA…EQREHVKEQR (77 aa)). 2 disordered regions span residues 82 to 109 (GVRL…LKNA) and 129 to 160 (KKKQ…HRGK). The segment covering 86–99 (QGRRQKKINPKRLQ) has biased composition (basic residues). Over residues 133–146 (IMKEQREHVKEQRY) the composition is skewed to basic and acidic residues. Residues 147 to 160 (MLKKQKAKKKHRGK) are compositionally biased toward basic residues.

This is an uncharacterized protein from Bacillus subtilis (strain 168).